Reading from the N-terminus, the 249-residue chain is DNA polymerase sliding clamp 1 (249 aa).

It belongs to the PCNA family. In terms of assembly, homotrimer. The subunits circularize to form a toroid; DNA passes through its center. Replication factor C (RFC) is required to load the toroid on the DNA.

Functionally, sliding clamp subunit that acts as a moving platform for DNA processing. Responsible for tethering the catalytic subunit of DNA polymerase and other proteins to DNA during high-speed replication. The protein is DNA polymerase sliding clamp 1 of Pyrobaculum aerophilum (strain ATCC 51768 / DSM 7523 / JCM 9630 / CIP 104966 / NBRC 100827 / IM2).